The sequence spans 219 residues: Probable GTP-binding protein EngB (219 aa).

The EngB-type G domain maps to 24 to 207 (VQPEIAFAGR…HELIESWLRP (184 aa)). GTP-binding positions include 32–39 (GRSNAGKS), 59–63 (GRTQH), 81–84 (DLPG), 148–151 (TKCD), and 186–188 (FSA). Residues Ser39 and Thr61 each coordinate Mg(2+).

The protein belongs to the TRAFAC class TrmE-Era-EngA-EngB-Septin-like GTPase superfamily. EngB GTPase family. Mg(2+) is required as a cofactor.

Functionally, necessary for normal cell division and for the maintenance of normal septation. The protein is Probable GTP-binding protein EngB of Burkholderia ambifaria (strain ATCC BAA-244 / DSM 16087 / CCUG 44356 / LMG 19182 / AMMD) (Burkholderia cepacia (strain AMMD)).